Reading from the N-terminus, the 834-residue chain is Protein ROOT HAIR DEFECTIVE 3 homolog 2 (834 aa).

Over 1-683 (MGENDDGCST…EAHKRNNNWL (683 aa)) the chain is Cytoplasmic. The 216-residue stretch at 37-252 (GLSYAVVAIM…ISPGGLAGDR (216 aa)) folds into the GB1/RHD3-type G domain. 47–54 (GPQSSGKS) serves as a coordination point for GTP. Positions 214–241 (MIVALSSYEEKEKQFEQEVAELRQRFFH) form a coiled coil. A helical transmembrane segment spans residues 684 to 704 (PPAWAIVLMIVLGFNEFMMLL). The Lumenal segment spans residues 705–707 (KNP). Residues 708–728 (LYLLGFFVAFLLSKALWVQLD) form a helical membrane-spanning segment. Residues 729-834 (IPREFQHGAV…NVQESEISQM (106 aa)) are Cytoplasmic-facing. The segment covering 767-783 (TTQEVPDLSASQTYRQQ) has biased composition (polar residues). The tract at residues 767–834 (TTQEVPDLSA…NVQESEISQM (68 aa)) is disordered. Positions 784-803 (SPSHSISSTISESVASNISS) are enriched in low complexity. Residues 823 to 834 (TNNVQESEISQM) show a composition bias toward polar residues.

This sequence belongs to the TRAFAC class dynamin-like GTPase superfamily. GB1/RHD3 GTPase family. RHD3 subfamily. In terms of tissue distribution, expressed in roots, leaves, stems and flowers.

The protein localises to the endoplasmic reticulum membrane. Probable GTP-binding protein that may be involved in cell development. The protein is Protein ROOT HAIR DEFECTIVE 3 homolog 2 of Arabidopsis thaliana (Mouse-ear cress).